The chain runs to 245 residues: Transmembrane and ubiquitin-like domain-containing protein 1 (245 aa).

The interval Ala2–Ser30 is required to release iHOPS from membranes. The helical transmembrane segment at Val11–Thr31 threads the bilayer. The interval Thr33–Glu100 is disordered. Residues Ser73, Ser97, and Ser126 each carry the phosphoserine modification. The Ubiquitin-like domain occupies Leu102–Gly175. Transmembrane regions (helical) follow at residues Ile194–Ile214 and Phe219–Ala239.

As to quaternary structure, interacts with EEF1A1, CAMLG, GRIA2 and GRIP1. Interacts with NPM1 and CDKN2A; TMUB1 can enhance interaction between NPM1 and CDKN2A and is proposed to bridge the proteins; proposed to be mediated by iHOPS. Interacts with TUBG1. Interacts with ERLIN2 and AMFR; TMUB1 promotes the interaction of ERLIN2 with AMFR. Isoform 1 (lHOPS) is processed by regulated intramembrane proteolysis (RIP) in the N-terminus to release iHOPS from membranes. In terms of processing, isoform 2 seems to undergo a selective cleavage in the C-terminal region to release an additional cytoplasmic form. In terms of tissue distribution, expressed in adult brain; at protein level. Isoform 1 (lHOPS) is highly expressed in small intestine, stomach and epididymis. Isoform 2 (sHOPS) and iHOPS are abundantly expressed in brain, liver and adrenal gland.

The protein localises to the membrane. Its subcellular location is the postsynaptic cell membrane. The protein resides in the recycling endosome. It is found in the cytoplasm. It localises to the nucleus. The protein localises to the nucleolus. Its subcellular location is the cytoskeleton. The protein resides in the microtubule organizing center. It is found in the centrosome. In terms of biological role, involved in sterol-regulated ubiquitination and degradation of HMG-CoA reductase HMGCR. Involved in positive regulation of AMPA-selective glutamate receptor GRIA2 recycling to the cell surface. Acts as a negative regulator of hepatocyte growth during regeneration. May contribute to the regulation of translation during cell-cycle progression. May contribute to the regulation of cell proliferation. May be involved in centrosome assembly. Modulates stabilization and nucleolar localization of tumor suppressor CDKN2A and enhances association between CDKN2A and NPM1. In Mus musculus (Mouse), this protein is Transmembrane and ubiquitin-like domain-containing protein 1 (Tmub1).